The chain runs to 139 residues: ATP synthase epsilon chain (139 aa).

The protein belongs to the ATPase epsilon chain family. As to quaternary structure, F-type ATPases have 2 components, CF(1) - the catalytic core - and CF(0) - the membrane proton channel. CF(1) has five subunits: alpha(3), beta(3), gamma(1), delta(1), epsilon(1). CF(0) has three main subunits: a, b and c.

The protein localises to the cell inner membrane. Produces ATP from ADP in the presence of a proton gradient across the membrane. The polypeptide is ATP synthase epsilon chain (Pseudomonas putida (strain ATCC 700007 / DSM 6899 / JCM 31910 / BCRC 17059 / LMG 24140 / F1)).